The primary structure comprises 128 residues: Ribonuclease pancreatic (128 aa).

Positions 1–13 are enriched in basic and acidic residues; the sequence is KESPAMKFERQHM. Positions 1–26 are disordered; that stretch reads KESPAMKFERQHMDSGSTSSSNPTYC. Substrate-binding residues include Lys7 and Arg10. Residue His12 is the Proton acceptor of the active site. Polar residues predominate over residues 14-26; sequence DSGSTSSSNPTYC. 4 disulfides stabilise this stretch: Cys26–Cys84, Cys40–Cys95, Cys58–Cys110, and Cys65–Cys72. Residue Asn34 is glycosylated (N-linked (GlcNAc...) asparagine). 41–45 contributes to the substrate binding site; sequence KPVNT. N-linked (GlcNAc...) asparagine glycosylation occurs at Asn62. The substrate site is built by Lys66 and Arg85. His119 functions as the Proton donor in the catalytic mechanism.

Belongs to the pancreatic ribonuclease family. Monomer. Interacts with and forms tight 1:1 complexes with RNH1. Dimerization of two such complexes may occur. Interaction with RNH1 inhibits this protein. As to expression, pancreas.

It localises to the secreted. It carries out the reaction an [RNA] containing cytidine + H2O = an [RNA]-3'-cytidine-3'-phosphate + a 5'-hydroxy-ribonucleotide-3'-[RNA].. The enzyme catalyses an [RNA] containing uridine + H2O = an [RNA]-3'-uridine-3'-phosphate + a 5'-hydroxy-ribonucleotide-3'-[RNA].. Functionally, endonuclease that catalyzes the cleavage of RNA on the 3' side of pyrimidine nucleotides. Acts on single-stranded and double-stranded RNA. In Equus caballus (Horse), this protein is Ribonuclease pancreatic (RNASE1).